Consider the following 181-residue polypeptide: Disulfide bond formation protein B (181 aa).

The Cytoplasmic portion of the chain corresponds to 1-13 (MLSVGQWPNKPFA). The chain crosses the membrane as a helical span at residues 14–30 (WLLLFLGCSGLLGAALY). Residues 31–48 (FQMVLNLEPCVKCVYQRM) lie on the Periplasmic side of the membrane. Residues Cys-40 and Cys-43 are joined by a disulfide bond. A helical transmembrane segment spans residues 49–64 (AVIGIGLSAIVGLFGS). Topologically, residues 65-71 (GLWLTRW) are cytoplasmic. A helical transmembrane segment spans residues 72–89 (AALIGWLYSSYQGLLIAY). The Periplasmic segment spans residues 90–145 (DHWDLQTSKNAFFAVCESAPNFPDWAPMHEWMPGLFAAPGLCGDIDWQWLGLGMPG). A disulfide bridge links Cys-105 with Cys-131. A helical membrane pass occupies residues 146–164 (WMTVIFAGLLLIGIIVTIC). The Cytoplasmic portion of the chain corresponds to 165–181 (HIISSFTKKDGLVLYHK).

This sequence belongs to the DsbB family.

It localises to the cell inner membrane. Its function is as follows. Required for disulfide bond formation in some periplasmic proteins. Acts by oxidizing the DsbA protein. The chain is Disulfide bond formation protein B from Idiomarina loihiensis (strain ATCC BAA-735 / DSM 15497 / L2-TR).